Here is a 130-residue protein sequence, read N- to C-terminus: DNA-directed RNA polymerase subunit omega (130 aa).

Disordered regions lie at residues 79 to 98 and 108 to 130; these read EPESDTVPLIGSAGASVDAD and TEEELLKGLEGLAPPEEQPEEDE.

Belongs to the RNA polymerase subunit omega family. As to quaternary structure, the RNAP catalytic core consists of 2 alpha, 1 beta, 1 beta' and 1 omega subunit. When a sigma factor is associated with the core the holoenzyme is formed, which can initiate transcription.

The catalysed reaction is RNA(n) + a ribonucleoside 5'-triphosphate = RNA(n+1) + diphosphate. Functionally, promotes RNA polymerase assembly. Latches the N- and C-terminal regions of the beta' subunit thereby facilitating its interaction with the beta and alpha subunits. The sequence is that of DNA-directed RNA polymerase subunit omega from Nitrobacter winogradskyi (strain ATCC 25391 / DSM 10237 / CIP 104748 / NCIMB 11846 / Nb-255).